The sequence spans 315 residues: Transmembrane protein 231 (315 aa).

A helical membrane pass occupies residues 23-43 (AALFLLLTTALTYIPPLLVAF). Asn-194, Asn-199, and Asn-221 each carry an N-linked (GlcNAc...) asparagine glycan. The helical transmembrane segment at 262–282 (FWEMIKFAWIQYVSILLIFLW) threads the bilayer.

It belongs to the TMEM231 family. As to quaternary structure, part of the tectonic-like complex (also named B9 complex). Interacts with TMEM107.

It localises to the cell projection. The protein resides in the cilium membrane. In terms of biological role, transmembrane component of the tectonic-like complex, a complex localized at the transition zone of primary cilia and acting as a barrier that prevents diffusion of transmembrane proteins between the cilia and plasma membranes. Required for ciliogenesis and sonic hedgehog/SHH signaling. In Mus musculus (Mouse), this protein is Transmembrane protein 231 (Tmem231).